The primary structure comprises 184 residues: Ribosome-recycling factor (184 aa).

It belongs to the RRF family.

It localises to the cytoplasm. Its function is as follows. Responsible for the release of ribosomes from messenger RNA at the termination of protein biosynthesis. May increase the efficiency of translation by recycling ribosomes from one round of translation to another. The chain is Ribosome-recycling factor from Caldicellulosiruptor bescii (strain ATCC BAA-1888 / DSM 6725 / KCTC 15123 / Z-1320) (Anaerocellum thermophilum).